The primary structure comprises 251 residues: Ribosomal RNA small subunit methyltransferase J (251 aa).

S-adenosyl-L-methionine-binding positions include Arg100–Asp101, Glu116–Arg117, and Asp170.

This sequence belongs to the methyltransferase superfamily. RsmJ family.

Its subcellular location is the cytoplasm. It catalyses the reaction guanosine(1516) in 16S rRNA + S-adenosyl-L-methionine = N(2)-methylguanosine(1516) in 16S rRNA + S-adenosyl-L-homocysteine + H(+). Its function is as follows. Specifically methylates the guanosine in position 1516 of 16S rRNA. The polypeptide is Ribosomal RNA small subunit methyltransferase J (Actinobacillus pleuropneumoniae serotype 3 (strain JL03)).